A 124-amino-acid chain; its full sequence is uncharacterized protein (124 aa).

This protein may be involved in virus assembly. This is an uncharacterized protein from Sulfolobus spindle-shape virus 1 (SSV1).